The sequence spans 235 residues: tRNA (guanine-N(1)-)-methyltransferase (235 aa).

S-adenosyl-L-methionine-binding positions include Gly-112 and 132–137 (IGDYVL).

The protein belongs to the RNA methyltransferase TrmD family. Homodimer.

The protein localises to the cytoplasm. The catalysed reaction is guanosine(37) in tRNA + S-adenosyl-L-methionine = N(1)-methylguanosine(37) in tRNA + S-adenosyl-L-homocysteine + H(+). Functionally, specifically methylates guanosine-37 in various tRNAs. In Cytophaga hutchinsonii (strain ATCC 33406 / DSM 1761 / CIP 103989 / NBRC 15051 / NCIMB 9469 / D465), this protein is tRNA (guanine-N(1)-)-methyltransferase.